Reading from the N-terminus, the 317-residue chain is Testis-specific Y-encoded protein 1 (317 aa).

Disordered stretches follow at residues 1–39 (MSRP…FQVV) and 91–118 (DEEQ…PGGP). Composition is skewed to basic and acidic residues over residues 15 to 26 (QGQEERERRSEE) and 95 to 112 (EQRP…EQGQ).

The protein belongs to the nucleosome assembly protein (NAP) family. Post-translationally, phosphorylated. As to expression, testis. Probably in spermatogonia.

It localises to the cytoplasm. It is found in the nucleus. Its function is as follows. May be involved in sperm differentiation and proliferation. The chain is Testis-specific Y-encoded protein 1 (TSPY1) from Bos taurus (Bovine).